The following is a 749-amino-acid chain: Protein Niban 2 (749 aa).

Residue Gly-2 is the site of N-myristoyl glycine attachment. Positions 68-192 constitute a PH domain; that stretch reads RIIFSGNLFQ…WQAVLQDCVR (125 aa). Phosphoserine is present on residues Ser-568, Ser-574, Ser-607, Ser-628, Ser-647, Ser-650, Ser-669, Ser-674, Ser-685, Ser-695, and Ser-699. The disordered stretch occupies residues 589–749; it reads WGEQYGDSGD…EDSAGVQTEF (161 aa). Positions 710 to 719 are enriched in basic and acidic residues; it reads VDLEPPKPSD. Residues 723–749 are compositionally biased toward polar residues; that stretch reads GEQVSSPGSRPPIHTTTEDSAGVQTEF.

Belongs to the Niban family. As apoptosis proceeds, degraded via an proteasome-independent pathway, probably by caspases.

It localises to the cytoplasm. The protein localises to the cytosol. The protein resides in the cell junction. It is found in the adherens junction. Its subcellular location is the membrane. In terms of biological role, may play a role in apoptosis suppression. In Mus musculus (Mouse), this protein is Protein Niban 2.